The following is a 527-amino-acid chain: Acyl-coenzyme A thioesterase 4, mitochondrial (527 aa).

A mitochondrion-targeting transit peptide spans 1–75 (MMTPIGIRIR…FLFDPPPIRF (75 aa)). HotDog ACOT-type domains are found at residues 172–294 (ILYN…RDSK) and 370–487 (KDTC…GPEA).

This sequence belongs to the acyl coenzyme A hydrolase family. As to expression, mostly expressed at low levels in glandular trichomes (lupulin glands), and, to a lower extent, in stems, leaves, flowers and cones.

Its subcellular location is the mitochondrion. The catalysed reaction is 2-methylpropanoyl-CoA + H2O = 2-methylpropanoate + CoA + H(+). It catalyses the reaction propanoyl-CoA + H2O = propanoate + CoA + H(+). The enzyme catalyses octanoyl-CoA + H2O = octanoate + CoA + H(+). It carries out the reaction butanoyl-CoA + H2O = butanoate + CoA + H(+). The catalysed reaction is 3-methylbutanoyl-CoA + H2O = 3-methylbutanoate + CoA + H(+). It catalyses the reaction 2-methylbutanoyl-CoA + H2O = 2-methylbutanoate + CoA + H(+). In terms of biological role, acyl-CoA thioesterases are a group of enzymes that catalyze the hydrolysis of acyl-CoAs to the free fatty acid and coenzyme A (CoASH), providing the potential to regulate intracellular levels of acyl-CoAs, free fatty acids and CoASH. Active on acyl CoAs with short chains (propanoyl-CoA and butanoyl-CoA), branched short chains (2-methylpropanoyl-CoA, 2-methylbutanoyl-CoA and 3-methylbutanoyl-CoA) and medium chains (octanoyl-CoA). The polypeptide is Acyl-coenzyme A thioesterase 4, mitochondrial (Humulus lupulus (European hop)).